The following is a 338-amino-acid chain: Glycerol-3-phosphate dehydrogenase [NAD(P)+] (338 aa).

Positions 13, 14, and 108 each coordinate NADPH. 3 residues coordinate sn-glycerol 3-phosphate: Lys108, Gly139, and Ser141. Residue Ala143 participates in NADPH binding. 5 residues coordinate sn-glycerol 3-phosphate: Lys194, Asp247, Ser257, Arg258, and Asn259. Lys194 functions as the Proton acceptor in the catalytic mechanism. Arg258 lines the NADPH pocket. NADPH is bound by residues Val282 and Glu284.

It belongs to the NAD-dependent glycerol-3-phosphate dehydrogenase family.

It localises to the cytoplasm. The enzyme catalyses sn-glycerol 3-phosphate + NAD(+) = dihydroxyacetone phosphate + NADH + H(+). It carries out the reaction sn-glycerol 3-phosphate + NADP(+) = dihydroxyacetone phosphate + NADPH + H(+). It functions in the pathway membrane lipid metabolism; glycerophospholipid metabolism. Catalyzes the reduction of the glycolytic intermediate dihydroxyacetone phosphate (DHAP) to sn-glycerol 3-phosphate (G3P), the key precursor for phospholipid synthesis. The chain is Glycerol-3-phosphate dehydrogenase [NAD(P)+] from Streptococcus pneumoniae (strain Hungary19A-6).